Reading from the N-terminus, the 311-residue chain is Energy-coupling factor transporter ATP-binding protein EcfA (311 aa).

Residues 2-237 (IELRDLSYSY…AELIRRASLR (236 aa)) enclose the ABC transporter domain. 35–42 (GPNGAGKS) is a binding site for ATP.

Belongs to the ABC transporter superfamily. Energy-coupling factor EcfA family. In terms of assembly, forms a stable energy-coupling factor (ECF) transporter complex composed of 2 membrane-embedded substrate-binding proteins (S component), 2 ATP-binding proteins (A component) and 2 transmembrane proteins (T component).

The protein resides in the cell membrane. ATP-binding (A) component of a common energy-coupling factor (ECF) ABC-transporter complex. Unlike classic ABC transporters this ECF transporter provides the energy necessary to transport a number of different substrates. The sequence is that of Energy-coupling factor transporter ATP-binding protein EcfA from Methanothermobacter thermautotrophicus (strain ATCC 29096 / DSM 1053 / JCM 10044 / NBRC 100330 / Delta H) (Methanobacterium thermoautotrophicum).